A 372-amino-acid polypeptide reads, in one-letter code: ATP phosphoribosyltransferase regulatory subunit (372 aa).

This sequence belongs to the class-II aminoacyl-tRNA synthetase family. HisZ subfamily. Heteromultimer composed of HisG and HisZ subunits.

It is found in the cytoplasm. Its pathway is amino-acid biosynthesis; L-histidine biosynthesis; L-histidine from 5-phospho-alpha-D-ribose 1-diphosphate: step 1/9. Its function is as follows. Required for the first step of histidine biosynthesis. May allow the feedback regulation of ATP phosphoribosyltransferase activity by histidine. In Allorhizobium ampelinum (strain ATCC BAA-846 / DSM 112012 / S4) (Agrobacterium vitis (strain S4)), this protein is ATP phosphoribosyltransferase regulatory subunit.